The primary structure comprises 426 residues: Glutamate-1-semialdehyde 2,1-aminomutase (426 aa).

Residue Lys-265 is modified to N6-(pyridoxal phosphate)lysine.

Belongs to the class-III pyridoxal-phosphate-dependent aminotransferase family. HemL subfamily. As to quaternary structure, homodimer. Pyridoxal 5'-phosphate serves as cofactor.

The protein resides in the cytoplasm. The catalysed reaction is (S)-4-amino-5-oxopentanoate = 5-aminolevulinate. It functions in the pathway porphyrin-containing compound metabolism; protoporphyrin-IX biosynthesis; 5-aminolevulinate from L-glutamyl-tRNA(Glu): step 2/2. The sequence is that of Glutamate-1-semialdehyde 2,1-aminomutase from Salmonella choleraesuis (strain SC-B67).